Here is a 219-residue protein sequence, read N- to C-terminus: Putative NAD(P)H nitroreductase SSP0379 (219 aa).

This sequence belongs to the nitroreductase family. It depends on FMN as a cofactor.

The chain is Putative NAD(P)H nitroreductase SSP0379 from Staphylococcus saprophyticus subsp. saprophyticus (strain ATCC 15305 / DSM 20229 / NCIMB 8711 / NCTC 7292 / S-41).